The following is a 542-amino-acid chain: Chaperonin GroEL (542 aa).

ATP is bound by residues 29–32 (TLGP), lysine 50, 86–90 (DGTTT), glycine 415, and aspartate 495.

Belongs to the chaperonin (HSP60) family. As to quaternary structure, forms a cylinder of 14 subunits composed of two heptameric rings stacked back-to-back. Interacts with the co-chaperonin GroES.

The protein resides in the cytoplasm. The catalysed reaction is ATP + H2O + a folded polypeptide = ADP + phosphate + an unfolded polypeptide.. Together with its co-chaperonin GroES, plays an essential role in assisting protein folding. The GroEL-GroES system forms a nano-cage that allows encapsulation of the non-native substrate proteins and provides a physical environment optimized to promote and accelerate protein folding. The polypeptide is Chaperonin GroEL (Azobacteroides pseudotrichonymphae genomovar. CFP2).